A 395-amino-acid chain; its full sequence is S-adenosylmethionine synthase (395 aa).

ATP is bound at residue His-16. Residue Asp-18 participates in Mg(2+) binding. Residue Glu-44 coordinates K(+). Positions 57 and 100 each coordinate L-methionine. Residues 100–110 (QSPDIAQGVDD) form a flexible loop region. ATP is bound by residues 174–176 (DAK), 241–242 (RF), Asp-250, 256–257 (RK), Ala-273, and Lys-277. Position 250 (Asp-250) interacts with L-methionine. Lys-281 contacts L-methionine.

It belongs to the AdoMet synthase family. In terms of assembly, homotetramer; dimer of dimers. Mg(2+) is required as a cofactor. K(+) serves as cofactor.

It is found in the cytoplasm. It catalyses the reaction L-methionine + ATP + H2O = S-adenosyl-L-methionine + phosphate + diphosphate. It participates in amino-acid biosynthesis; S-adenosyl-L-methionine biosynthesis; S-adenosyl-L-methionine from L-methionine: step 1/1. Functionally, catalyzes the formation of S-adenosylmethionine (AdoMet) from methionine and ATP. The overall synthetic reaction is composed of two sequential steps, AdoMet formation and the subsequent tripolyphosphate hydrolysis which occurs prior to release of AdoMet from the enzyme. The polypeptide is S-adenosylmethionine synthase (Limosilactobacillus reuteri (strain DSM 20016) (Lactobacillus reuteri)).